Consider the following 504-residue polypeptide: Sodium-coupled neutral amino acid transporter 3 (504 aa).

Serine 52 carries the post-translational modification Phosphoserine; by PKC. Asparagine 73 is a glycosylation site (N-linked (GlcNAc...) asparagine). A run of 5 helical transmembrane segments spans residues 82 to 102 (GILGLAYAMANTGIILFLFLL), 105 to 125 (VALLSSYSIHLLLKSSGIVGI), 143 to 163 (AAALAITLQNIGAMSSYLYII), 186 to 206 (MDGNYLVILVSVIIILPLALM), and 212 to 232 (LGYSSGFSLSCMVFFLIAVIY). Cysteine 239 and cysteine 275 are joined by a disulfide. Asparagine 247 and asparagine 251 each carry an N-linked (GlcNAc...) asparagine glycan. A helical membrane pass occupies residues 287–307 (AYTIPIMAFAFVCHPEVLPIY). Asparagine 323 carries N-linked (GlcNAc...) asparagine glycosylation. 5 helical membrane-spanning segments follow: residues 324–344 (LSIAVMYVMYFLAALFGYLTF), 366–386 (ILCVRVAVLIAVTLTVPIVLF), 408–428 (VLIATGLLTCINLLVIFAPNI), 431–451 (IFGIIGATSAPCLIFIFPAIF), and 469–489 (ILALCFAAVGFLLMTMSLSFI).

It belongs to the amino acid/polyamine transporter 2 family. In terms of processing, phosphorylation at Ser-52 induces internalization and sequestration into an intracellular reservoir. During dephosphorylation by protein phosphatases, can recycle back to the plasma membrane and regain activity. Prolonged phosphorylation results in its degradation. In terms of tissue distribution, highly expressed in liver. Expressed in skeletal muscle. Expressed in kidney, heart and brain. Not detected in gut, lung or spleen. Expressed ubiquitously in hepatocytes in liver whereas in kidney expression is restricted to the medulla. Within brain, expressed in glial cells. In the cerebellum, expressed on Bergmann glial fibers in the molecular layer and astrocytes in the granule layer. Expressed in brain kidney and liver (at protein level). In the adult kidney, highly expressed in the outer strip of the outer medulla and medullary rays penetrating into the kidney cortex (at protein level).

It is found in the cell membrane. Its subcellular location is the basolateral cell membrane. The catalysed reaction is L-glutamine(out) + Na(+)(out) + H(+)(in) = L-glutamine(in) + Na(+)(in) + H(+)(out). It catalyses the reaction L-asparagine(out) + Na(+)(out) + H(+)(in) = L-asparagine(in) + Na(+)(in) + H(+)(out). The enzyme catalyses L-histidine(out) + Na(+)(out) + H(+)(in) = L-histidine(in) + Na(+)(in) + H(+)(out). L-glutamine efflux and L-glutamine uptake are regulated by CO2/HCO3(-) through SLC4A4 leading to modulation of cytosolic pH and Na(+)concentration. Symporter that cotransports specific neutral amino acids and sodium ions, coupled to an H(+) antiporter activity. Mainly participates in the glutamate-GABA-glutamine cycle in brain where it transports L-glutamine from astrocytes in the intercellular space for the replenishment of both neurotransmitters glutamate and gamma-aminobutyric acid (GABA) in neurons. Also functions as the major influx transporter in ganglion cells mediating the uptake of glutamine. The transport activity is specific for L-glutamine, L-histidine and L-asparagine. The transport is electroneutral coupled to the cotransport of 1 Na(+) and the antiport of 1 H(+), pH dependent, saturable, Li(+) tolerant and functions in both direction depending on the concentration gradients of its substrates and cotransported ions. Also mediates an amino acid-gated H(+) conductance that is not stoichiometrically coupled to the amino acid transport but which influences the ionic gradients that drive the amino acid transport. In addition, may play a role in nitrogen metabolism, amino acid homeostasis, glucose metabolism and renal ammoniagenesis. The protein is Sodium-coupled neutral amino acid transporter 3 of Rattus norvegicus (Rat).